Here is a 275-residue protein sequence, read N- to C-terminus: 4-hydroxy-tetrahydrodipicolinate reductase (275 aa).

NAD(+)-binding positions include 8 to 13 (GATGRM), 100 to 102 (GTT), and 126 to 129 (SPNM). The active-site Proton donor/acceptor is the H160. A (S)-2,3,4,5-tetrahydrodipicolinate-binding site is contributed by H161. Catalysis depends on K164, which acts as the Proton donor. Residue 170–171 (GT) coordinates (S)-2,3,4,5-tetrahydrodipicolinate.

This sequence belongs to the DapB family.

It localises to the cytoplasm. The catalysed reaction is (S)-2,3,4,5-tetrahydrodipicolinate + NAD(+) + H2O = (2S,4S)-4-hydroxy-2,3,4,5-tetrahydrodipicolinate + NADH + H(+). It catalyses the reaction (S)-2,3,4,5-tetrahydrodipicolinate + NADP(+) + H2O = (2S,4S)-4-hydroxy-2,3,4,5-tetrahydrodipicolinate + NADPH + H(+). Its pathway is amino-acid biosynthesis; L-lysine biosynthesis via DAP pathway; (S)-tetrahydrodipicolinate from L-aspartate: step 4/4. Its function is as follows. Catalyzes the conversion of 4-hydroxy-tetrahydrodipicolinate (HTPA) to tetrahydrodipicolinate. This chain is 4-hydroxy-tetrahydrodipicolinate reductase, found in Methanopyrus kandleri (strain AV19 / DSM 6324 / JCM 9639 / NBRC 100938).